The sequence spans 316 residues: UDP-N-acetylenolpyruvoylglucosamine reductase (316 aa).

In terms of domain architecture, FAD-binding PCMH-type spans 30–194; it reads VGGEADYLVF…LSVKFALAPG (165 aa). R173 is a catalytic residue. S223 acts as the Proton donor in catalysis. E293 is a catalytic residue.

This sequence belongs to the MurB family. FAD is required as a cofactor.

It is found in the cytoplasm. It catalyses the reaction UDP-N-acetyl-alpha-D-muramate + NADP(+) = UDP-N-acetyl-3-O-(1-carboxyvinyl)-alpha-D-glucosamine + NADPH + H(+). The protein operates within cell wall biogenesis; peptidoglycan biosynthesis. Functionally, cell wall formation. The protein is UDP-N-acetylenolpyruvoylglucosamine reductase of Streptococcus pneumoniae serotype 2 (strain D39 / NCTC 7466).